The sequence spans 256 residues: tRNA pseudouridine synthase A (256 aa).

Aspartate 55 acts as the Nucleophile in catalysis. Tyrosine 113 is a substrate binding site.

This sequence belongs to the tRNA pseudouridine synthase TruA family. Homodimer.

The enzyme catalyses uridine(38/39/40) in tRNA = pseudouridine(38/39/40) in tRNA. Functionally, formation of pseudouridine at positions 38, 39 and 40 in the anticodon stem and loop of transfer RNAs. The protein is tRNA pseudouridine synthase A of Ligilactobacillus salivarius (strain UCC118) (Lactobacillus salivarius).